The primary structure comprises 344 residues: MREQLEALRDDAIKKIEQAQEKKVVQEIRVKYLGKKGPVTEVLRGMGKLSPEERPVIGQLANDVREAIGKAIESKMEALEQAEIHRKLQEETIDVTLPGRPVLKGGAHPLTATITEVEDLFIGLGFSVAEGPQIETDYYNFEALNLPKDHPARDMQDSFYFTDELLLRTQTSPVQARTMEKYKGKGPIKIICPGKVFRRDDDDATHSHQFMQIEGLYVDHGVRMSDLKGVLQAFAKSFFGEERSIRLRPSFFPFTEPSVEVDVSCGICHGDGCRVCKQTGWIEILGAGMVHPRVLEMSGFNPNEYSGFAFGMGVERLSMLKYGIDDIRHFYTNDRRFLAQFKRV.

Mg(2+) is bound at residue E256.

Belongs to the class-II aminoacyl-tRNA synthetase family. Phe-tRNA synthetase alpha subunit type 1 subfamily. In terms of assembly, tetramer of two alpha and two beta subunits. It depends on Mg(2+) as a cofactor.

The protein resides in the cytoplasm. The catalysed reaction is tRNA(Phe) + L-phenylalanine + ATP = L-phenylalanyl-tRNA(Phe) + AMP + diphosphate + H(+). This chain is Phenylalanine--tRNA ligase alpha subunit (pheS), found in Halalkalibacterium halodurans (strain ATCC BAA-125 / DSM 18197 / FERM 7344 / JCM 9153 / C-125) (Bacillus halodurans).